The chain runs to 355 residues: Uroporphyrinogen decarboxylase (355 aa).

Substrate contacts are provided by residues Arg27–Arg31, Asp77, Tyr154, Thr209, and His327.

This sequence belongs to the uroporphyrinogen decarboxylase family. As to quaternary structure, homodimer.

It is found in the cytoplasm. It carries out the reaction uroporphyrinogen III + 4 H(+) = coproporphyrinogen III + 4 CO2. It functions in the pathway porphyrin-containing compound metabolism; protoporphyrin-IX biosynthesis; coproporphyrinogen-III from 5-aminolevulinate: step 4/4. Catalyzes the decarboxylation of four acetate groups of uroporphyrinogen-III to yield coproporphyrinogen-III. The sequence is that of Uroporphyrinogen decarboxylase from Aeromonas salmonicida (strain A449).